The primary structure comprises 142 residues: Large ribosomal subunit protein uL11 (142 aa).

It belongs to the universal ribosomal protein uL11 family. As to quaternary structure, part of the ribosomal stalk of the 50S ribosomal subunit. Interacts with L10 and the large rRNA to form the base of the stalk. L10 forms an elongated spine to which L12 dimers bind in a sequential fashion forming a multimeric L10(L12)X complex. In terms of processing, one or more lysine residues are methylated.

Forms part of the ribosomal stalk which helps the ribosome interact with GTP-bound translation factors. In Mycobacterium tuberculosis (strain ATCC 25177 / H37Ra), this protein is Large ribosomal subunit protein uL11.